A 614-amino-acid chain; its full sequence is UvrABC system protein C (614 aa).

Positions 20–98 (TAPGVYRMYA…IKSLSPRYNV (79 aa)) constitute a GIY-YIG domain. The UVR domain occupies 207–242 (DELTRELGEQMQAASEALEFEQAARLRDLISSLRSM).

It belongs to the UvrC family. Interacts with UvrB in an incision complex.

It localises to the cytoplasm. Its function is as follows. The UvrABC repair system catalyzes the recognition and processing of DNA lesions. UvrC both incises the 5' and 3' sides of the lesion. The N-terminal half is responsible for the 3' incision and the C-terminal half is responsible for the 5' incision. The sequence is that of UvrABC system protein C from Stenotrophomonas maltophilia (strain K279a).